Reading from the N-terminus, the 130-residue chain is Phosphomevalonate dehydratase small subunit (130 aa).

Residue Ser62 is the Proton acceptor of the active site.

Belongs to the AcnX type II small subunit family. Heterodimer composed of a large subunit (PMDh-L) and a small subunit (PMDh-S).

It catalyses the reaction (R)-5-phosphomevalonate = (2E)-3-methyl-5-phosphooxypent-2-enoate + H2O. It participates in isoprenoid biosynthesis; isopentenyl diphosphate biosynthesis via mevalonate pathway. Component of a hydro-lyase that catalyzes the dehydration of mevalonate 5-phosphate (MVA5P) to form trans-anhydromevalonate 5-phosphate (tAHMP). Involved in the archaeal mevalonate (MVA) pathway, which provides fundamental precursors for isoprenoid biosynthesis, such as isopentenyl diphosphate (IPP) and dimethylallyl diphosphate (DMAPP). In Thermococcus sibiricus (strain DSM 12597 / MM 739), this protein is Phosphomevalonate dehydratase small subunit.